The sequence spans 806 residues: Cell cycle progression protein 1 (806 aa).

Over 1 to 216 the chain is Cytoplasmic; the sequence is MSENSSDSDS…KRQFSSGLNK (216 aa). An interaction with MCF2L and SRC region spans residues 1-307; it reads MSENSSDSDS…QKTNLATENQ (307 aa). Disordered stretches follow at residues 80 to 105 and 152 to 207; these read SSTIEAEEEKIPEDNIYIGTASDDSD and VFSS…KESK. Over residues 175–184 the composition is skewed to basic residues; the sequence is FRRRRARKKT. Serine 186 is modified (phosphoserine). A compositionally biased stretch (basic and acidic residues) spans 190–207; that stretch reads SEDRLVAEQETEPSKESK. Residues 217 to 237 form a helical; Signal-anchor for type II membrane protein membrane-spanning segment; it reads CVILALVIAVSMGFGHFYGTI. The Lumenal portion of the chain corresponds to 238–806; sequence QIQKRQQLVR…LGQLPFDPQY (569 aa). Positions 305–449 form a coiled coil; it reads ENQYLRVSLE…EQQRSDLWER (145 aa). Positions 457-467 are enriched in basic and acidic residues; the sequence is QSGKQETDGKK. A disordered region spans residues 457–478; that stretch reads QSGKQETDGKKKVGRGNHRAKN. Residues 468 to 478 are compositionally biased toward basic residues; the sequence is KVGRGNHRAKN. Positions 503–529 form a coiled coil; it reads VRHHKEKIKQAKEAVKENLKKFSDSVK. Positions 758–778 are disordered; that stretch reads SRHRKQEQKHLQPQPYKREGK.

The protein belongs to the CCPG1 family. Interacts with MCF2L. May interact with MCF2, ARHGEF1, BCR, VAV1 and FGD1, but not with TIAM1. Interacts with GTP-bound CDC42 and SRC.

The protein localises to the cytoplasmic granule membrane. Functionally, acts as an assembly platform for Rho protein signaling complexes. Limits guanine nucleotide exchange activity of MCF2L toward RHOA, which results in an inhibition of both its transcriptional activation ability and its transforming activity. Does not inhibit activity of MCF2L toward CDC42, or activity of MCF2 toward either RHOA or CDC42. May be involved in cell cycle regulation. The protein is Cell cycle progression protein 1 (CCPG1) of Pongo abelii (Sumatran orangutan).